Reading from the N-terminus, the 1151-residue chain is Error-prone DNA polymerase (1151 aa).

The interval 1108–1151 is disordered; it reads HPVPSGDALIEPLNDDRRDHADAPAQKIRHPRNVRILPPSRDFH.

Belongs to the DNA polymerase type-C family. DnaE2 subfamily.

The protein localises to the cytoplasm. It carries out the reaction DNA(n) + a 2'-deoxyribonucleoside 5'-triphosphate = DNA(n+1) + diphosphate. In terms of biological role, DNA polymerase involved in damage-induced mutagenesis and translesion synthesis (TLS). It is not the major replicative DNA polymerase. The sequence is that of Error-prone DNA polymerase from Bradyrhizobium diazoefficiens (strain JCM 10833 / BCRC 13528 / IAM 13628 / NBRC 14792 / USDA 110).